The primary structure comprises 132 residues: Long-chain acyl-CoA thioesterase FadM (132 aa).

D13 is an active-site residue.

The protein belongs to the 4-hydroxybenzoyl-CoA thioesterase family. As to quaternary structure, homotetramer.

It catalyses the reaction (3E,5Z)-tetradecadienoyl-CoA + H2O = (3E,5Z)-tetradecadienoate + CoA + H(+). The enzyme catalyses (3E,5Z)-dodecadienoyl-CoA + H2O = (3E,5Z)-dodecadienoate + CoA + H(+). It carries out the reaction (9Z)-octadecenoyl-CoA + H2O = (9Z)-octadecenoate + CoA + H(+). The catalysed reaction is octadecanoyl-CoA + H2O = octadecanoate + CoA + H(+). It catalyses the reaction hexadecanoyl-CoA + H2O = hexadecanoate + CoA + H(+). The enzyme catalyses (3S)-hydroxytetradecanoyl-CoA + H2O = (3S)-hydroxytetradecanoate + CoA + H(+). It carries out the reaction tetradecanoyl-CoA + H2O = tetradecanoate + CoA + H(+). Functionally, long-chain acyl-CoA thioesterase that could be involved in beta-oxidation of fatty acids. Is most active with 3,5-tetradecadienoyl-CoA, a metabolite of oleic acid that is hydrolyzed during oleate beta-oxidation, but can also use other substrates such as 3,5-dodecadienoyl-CoA, 9-cis-octadecenoyl-CoA, octadecanoyl-CoA, hexadecanoyl-CoA, 3-hydroxytetradecanoyl-CoA and tetradecanoyl-CoA. This Escherichia coli (strain K12) protein is Long-chain acyl-CoA thioesterase FadM.